The sequence spans 449 residues: NADH-quinone oxidoreductase subunit H (449 aa).

Transmembrane regions (helical) follow at residues 29 to 49, 96 to 116, 136 to 156, 177 to 197, 211 to 231, 259 to 279, 298 to 318, 330 to 350, and 365 to 385; these read ILLK…FAIV, PIFI…FAVI, LPVS…GLIL, IISY…YAGT, WYIV…GETN, FFFL…TTLF, WVPL…FIWL, FMSF…LAVA, and WLVG…IDPG. The segment covering 393-402 has biased composition (basic and acidic residues); the sequence is LEEAEQRKLA. The segment at 393-449 is disordered; the sequence is LEEAEQRKLAEAPSLDRIPWPPPPQAAGRGRPAVSAGASANGSSTVIPADPGPRQER. Residues 418-436 show a composition bias toward low complexity; the sequence is AAGRGRPAVSAGASANGSS.

It belongs to the complex I subunit 1 family. As to quaternary structure, NDH-1 is composed of 14 different subunits. Subunits NuoA, H, J, K, L, M, N constitute the membrane sector of the complex.

It is found in the cell membrane. The catalysed reaction is a quinone + NADH + 5 H(+)(in) = a quinol + NAD(+) + 4 H(+)(out). NDH-1 shuttles electrons from NADH, via FMN and iron-sulfur (Fe-S) centers, to quinones in the respiratory chain. The immediate electron acceptor for the enzyme in this species is believed to be ubiquinone. Couples the redox reaction to proton translocation (for every two electrons transferred, four hydrogen ions are translocated across the cytoplasmic membrane), and thus conserves the redox energy in a proton gradient. This subunit may bind ubiquinone. The sequence is that of NADH-quinone oxidoreductase subunit H from Frankia casuarinae (strain DSM 45818 / CECT 9043 / HFP020203 / CcI3).